A 327-amino-acid chain; its full sequence is Phospho-N-acetylmuramoyl-pentapeptide-transferase (327 aa).

A run of 10 helical transmembrane segments spans residues 3–23 (TAII…PAFI), 51–71 (TMGG…IALF), 79–99 (VTTI…DDFL), 115–135 (LFLQ…HGGG), 140–160 (VFGF…FWLV), 172–192 (IDGL…VIAL), 197–217 (FDLL…FGFN), 223–243 (IFMG…LSIA), 248–268 (WTLL…MLQV), and 306–326 (VDFL…AILY).

The protein belongs to the glycosyltransferase 4 family. MraY subfamily. It depends on Mg(2+) as a cofactor.

The protein resides in the cell membrane. It catalyses the reaction UDP-N-acetyl-alpha-D-muramoyl-L-alanyl-gamma-D-glutamyl-L-lysyl-D-alanyl-D-alanine + di-trans,octa-cis-undecaprenyl phosphate = Mur2Ac(oyl-L-Ala-gamma-D-Glu-L-Lys-D-Ala-D-Ala)-di-trans,octa-cis-undecaprenyl diphosphate + UMP. It functions in the pathway cell wall biogenesis; peptidoglycan biosynthesis. In terms of biological role, catalyzes the initial step of the lipid cycle reactions in the biosynthesis of the cell wall peptidoglycan: transfers peptidoglycan precursor phospho-MurNAc-pentapeptide from UDP-MurNAc-pentapeptide onto the lipid carrier undecaprenyl phosphate, yielding undecaprenyl-pyrophosphoryl-MurNAc-pentapeptide, known as lipid I. This chain is Phospho-N-acetylmuramoyl-pentapeptide-transferase, found in Streptococcus gordonii (strain Challis / ATCC 35105 / BCRC 15272 / CH1 / DL1 / V288).